A 271-amino-acid chain; its full sequence is Ribosomal RNA small subunit methyltransferase A (271 aa).

S-adenosyl-L-methionine-binding residues include His14, Leu16, Gly41, Glu63, Asp89, and Asn107.

Belongs to the class I-like SAM-binding methyltransferase superfamily. rRNA adenine N(6)-methyltransferase family. RsmA subfamily.

The protein resides in the cytoplasm. It carries out the reaction adenosine(1518)/adenosine(1519) in 16S rRNA + 4 S-adenosyl-L-methionine = N(6)-dimethyladenosine(1518)/N(6)-dimethyladenosine(1519) in 16S rRNA + 4 S-adenosyl-L-homocysteine + 4 H(+). Its function is as follows. Specifically dimethylates two adjacent adenosines (A1518 and A1519) in the loop of a conserved hairpin near the 3'-end of 16S rRNA in the 30S particle. May play a critical role in biogenesis of 30S subunits. The sequence is that of Ribosomal RNA small subunit methyltransferase A from Lawsonia intracellularis (strain PHE/MN1-00).